A 906-amino-acid polypeptide reads, in one-letter code: Cadherin-2 (906 aa).

Positions 1–25 (MCRIAGAPRTLLPLLAALLQASVEA) are cleaved as a signal peptide. Residues 26-159 (SGEIALCKTG…HSGHLQRQKR (134 aa)) constitute a propeptide that is removed on maturation. A phosphoserine mark is found at Ser96 and Ser135. 5 Cadherin domains span residues 160-267 (DWVI…RPEF), 268-382 (LHQV…PPEF), 383-497 (TAMT…NPYF), 498-603 (APNP…DNAP), and 604-714 (QVLP…DVDR). At 160–724 (DWVIPPINLP…IVGAGLGTGA (565 aa)) the chain is on the extracellular side. Ca(2+) is bound at residue Glu170. The N-linked (GlcNAc...) asparagine glycan is linked to Asn190. Residues Asp226, Glu228, Asp259, Met260, Asn261, Asp262, and Asn263 each contribute to the Ca(2+) site. An N-linked (GlcNAc...) asparagine glycan is attached at Asn273. Ca(2+)-binding residues include Asp293, Asp295, and Asn301. N-linked (GlcNAc...) asparagine glycosylation is present at Asn325. Asp353 is a binding site for Ca(2+). Residues Asn402, Asn572, Asn622, Asn651, and Asn692 are each glycosylated (N-linked (GlcNAc...) asparagine). The helical transmembrane segment at 725 to 745 (IIAILLCIIILLILVLMFVVW) threads the bilayer. The Cytoplasmic portion of the chain corresponds to 746–906 (MKRRDKERQA…LADMYGGGDD (161 aa)). Positions 863 to 880 (SGSTAGSLSSLNSSSSGG) are enriched in low complexity. The interval 863–884 (SGSTAGSLSSLNSSSSGGEQDY) is disordered.

In terms of assembly, homodimer (via extracellular region). Can also form heterodimers with other cadherins (via extracellular region). Dimerization occurs in trans, i.e. with a cadherin chain from another cell. Interacts with CDCP1. Interacts with PCDH8; this complex may also include TAOK2. The interaction with PCDH8 may lead to internalization through TAOK2/p38 MAPK pathway. Identified in a complex containing FGFR4, NCAM1, CDH2, PLCG1, FRS2, SRC, SHC1, GAP43 and CTTN. May interact with OBSCN (via protein kinase domain 2). Interacts with FBXO45. Cleaved by MMP24. Ectodomain cleavage leads to the generation of a soluble 90 kDa N-terminal soluble fragment and a 45 kDa membrane-bound C-terminal fragment 1 (CTF1), which is further cleaved by gamma-secretase into a 35 kDa. Cleavage in neural stem cells by MMP24 affects CDH2-mediated anchorage of neural stem cells to ependymocytes in the adult subependymal zone, leading to modulate neural stem cell quiescence.

The protein resides in the cell membrane. It localises to the sarcolemma. It is found in the cell junction. The protein localises to the cell surface. Its subcellular location is the desmosome. The protein resides in the adherens junction. Functionally, calcium-dependent cell adhesion protein; preferentially mediates homotypic cell-cell adhesion by dimerization with a CDH2 chain from another cell. Cadherins may thus contribute to the sorting of heterogeneous cell types. Acts as a regulator of neural stem cells quiescence by mediating anchorage of neural stem cells to ependymocytes in the adult subependymal zone: upon cleavage by MMP24, CDH2-mediated anchorage is affected, leading to modulate neural stem cell quiescence. Plays a role in cell-to-cell junction formation between pancreatic beta cells and neural crest stem (NCS) cells, promoting the formation of processes by NCS cells. Required for proper neurite branching. Required for pre- and postsynaptic organization. CDH2 may be involved in neuronal recognition mechanism. In hippocampal neurons, may regulate dendritic spine density. In Callithrix jacchus (White-tufted-ear marmoset), this protein is Cadherin-2 (CDH2).